Consider the following 211-residue polypeptide: Probable GTP-binding protein EngB (211 aa).

The EngB-type G domain maps to 21 to 197 (TAPEFAFLGR…WGEIHRVAAE (177 aa)). Residues 29–36 (GRSNVGKS), 55–59 (GRTRA), 80–83 (DLPG), 147–150 (TKAD), and 176–178 (CSA) each bind GTP. 2 residues coordinate Mg(2+): serine 36 and threonine 57.

It belongs to the TRAFAC class TrmE-Era-EngA-EngB-Septin-like GTPase superfamily. EngB GTPase family. Requires Mg(2+) as cofactor.

Its function is as follows. Necessary for normal cell division and for the maintenance of normal septation. This Acidobacterium capsulatum (strain ATCC 51196 / DSM 11244 / BCRC 80197 / JCM 7670 / NBRC 15755 / NCIMB 13165 / 161) protein is Probable GTP-binding protein EngB.